Consider the following 288-residue polypeptide: MALFSKKDKYIRINPNRSVREKPQAKPEVPDELFSQCPGCKHTIYQKDLGSERICPHCSYTFRISAQERLALTIDMGTFKELFTGIESKDPLHFPGYQKKLASMREKTGLHEAVVTGTALIKGQTVALGIMDSNFIMASMGTVVGEKITRLFEYATVEKLPVVLFTASGGARMQEGIMSLMQMAKISAAVKRHSNAGLFYLTILTDPTTGGVTASFAMEGDIILAEPQSLVGFAGRRVIENTVRESLPEDFQKAEFLLEHGFVDAIVKRRDLPDTIASLVRLHGGSPR.

The 256-residue stretch at 33 to 288 (LFSQCPGCKH…LVRLHGGSPR (256 aa)) folds into the CoA carboxyltransferase N-terminal domain. Cysteine 37, cysteine 40, cysteine 55, and cysteine 58 together coordinate Zn(2+). The C4-type zinc finger occupies 37–58 (CPGCKHTIYQKDLGSERICPHC).

The protein belongs to the AccD/PCCB family. In terms of assembly, acetyl-CoA carboxylase is a heterohexamer composed of biotin carboxyl carrier protein (AccB), biotin carboxylase (AccC) and two subunits each of ACCase subunit alpha (AccA) and ACCase subunit beta (AccD). It depends on Zn(2+) as a cofactor.

Its subcellular location is the cytoplasm. The enzyme catalyses N(6)-carboxybiotinyl-L-lysyl-[protein] + acetyl-CoA = N(6)-biotinyl-L-lysyl-[protein] + malonyl-CoA. Its pathway is lipid metabolism; malonyl-CoA biosynthesis; malonyl-CoA from acetyl-CoA: step 1/1. In terms of biological role, component of the acetyl coenzyme A carboxylase (ACC) complex. Biotin carboxylase (BC) catalyzes the carboxylation of biotin on its carrier protein (BCCP) and then the CO(2) group is transferred by the transcarboxylase to acetyl-CoA to form malonyl-CoA. This is Acetyl-coenzyme A carboxylase carboxyl transferase subunit beta from Streptococcus pneumoniae serotype 4 (strain ATCC BAA-334 / TIGR4).